The primary structure comprises 104 residues: Large ribosomal subunit protein uL24 (104 aa).

The protein belongs to the universal ribosomal protein uL24 family. In terms of assembly, part of the 50S ribosomal subunit.

Functionally, one of two assembly initiator proteins, it binds directly to the 5'-end of the 23S rRNA, where it nucleates assembly of the 50S subunit. In terms of biological role, one of the proteins that surrounds the polypeptide exit tunnel on the outside of the subunit. This chain is Large ribosomal subunit protein uL24, found in Cronobacter sakazakii (strain ATCC BAA-894) (Enterobacter sakazakii).